Here is a 618-residue protein sequence, read N- to C-terminus: Carbamoyl phosphate synthase large chain, C-terminal section (618 aa).

The tract at residues 1 to 78 (MDMEKLKEIL…ETFVYKEQDE (78 aa)) is oligomerization domain. The carbamoyl phosphate synthetic domain stretch occupies residues 79-477 (SNPSDRKKVI…YKAQLSANME (399 aa)). The 192-residue stretch at 208–399 (SKLLKKLNIP…LAKLATKIML (192 aa)) folds into the ATP-grasp domain. Residues arginine 244, lysine 283, leucine 285, glutamate 290, glycine 315, valine 316, histidine 317, serine 318, glutamine 358, and glutamate 370 each coordinate ATP. The Mg(2+) site is built by glutamine 358, glutamate 370, and asparagine 372. Mn(2+) contacts are provided by glutamine 358, glutamate 370, and asparagine 372. An MGS-like domain is found at 476–618 (MELPIVGNVF…ELDARIKNRF (143 aa)). Positions 478–618 (LPIVGNVFIS…ELDARIKNRF (141 aa)) are allosteric domain.

This sequence belongs to the CarB family. As to quaternary structure, composed of two chains; the small (or glutamine) chain promotes the hydrolysis of glutamine to ammonia, which is used by the large (or ammonia) chain to synthesize carbamoyl phosphate. Tetramer of heterodimers (alpha,beta)4. The cofactor is Mg(2+). Mn(2+) is required as a cofactor.

The enzyme catalyses hydrogencarbonate + L-glutamine + 2 ATP + H2O = carbamoyl phosphate + L-glutamate + 2 ADP + phosphate + 2 H(+). It carries out the reaction hydrogencarbonate + NH4(+) + 2 ATP = carbamoyl phosphate + 2 ADP + phosphate + 2 H(+). It participates in amino-acid biosynthesis; L-arginine biosynthesis; carbamoyl phosphate from bicarbonate: step 1/1. The protein operates within pyrimidine metabolism; UMP biosynthesis via de novo pathway; (S)-dihydroorotate from bicarbonate: step 1/3. In terms of biological role, large subunit of the glutamine-dependent carbamoyl phosphate synthetase (CPSase). CPSase catalyzes the formation of carbamoyl phosphate from the ammonia moiety of glutamine, carbonate, and phosphate donated by ATP, constituting the first step of 2 biosynthetic pathways, one leading to arginine and/or urea and the other to pyrimidine nucleotides. The large subunit (synthetase) binds the substrates ammonia (free or transferred from glutamine from the small subunit), hydrogencarbonate and ATP and carries out an ATP-coupled ligase reaction, activating hydrogencarbonate by forming carboxy phosphate which reacts with ammonia to form carbamoyl phosphate. The protein is Carbamoyl phosphate synthase large chain, C-terminal section (carB2) of Methanocaldococcus jannaschii (strain ATCC 43067 / DSM 2661 / JAL-1 / JCM 10045 / NBRC 100440) (Methanococcus jannaschii).